Reading from the N-terminus, the 391-residue chain is MSRFLICSFALVLLYPAGIDMYLVGLPRIAADLNASEAQLHIAFSVYLAGMAAAMLFAGKVADRSGRKPVAIPGAALFIIASVFCSLAETSTLFLAGRFLQGLGAGCCYVVAFAILRDTLDDRRRAKVLSLLNGITCIIPVLAPVLGHLIMLKFPWQSLFWTMAMMGIAVLMLSLFILKETRPASPAASDKPRENSESLLNRFFLSRVVITTLSVSVILTFVNTSPVLLMEIMGFERGEYATIMALTAGVSMTVSFSTPFALGIFKPRTLMITSQVLFLAAGITLAVSPSHAVSLFGITLICAGFSVGFGVAMSQALGPFSLRAGVASSTLGIAQVCGSSLWIWLAAVVGIGAWNMLIGILIACSIVSLLLIMFVAPGRPVAAHEEIHHHA.

The next 12 helical transmembrane spans lie at 4–24 (FLIC…MYLV), 42–62 (IAFS…GKVA), 69–89 (PVAI…SLAE), 93–113 (LFLA…VVAF), 131–151 (LLNG…HLIM), 158–178 (SLFW…LFIL), 203–222 (FFLS…LTFV), 245–265 (ALTA…LGIF), 269–289 (TLMI…AVSP), 293–313 (VSLF…GVAM), 331–351 (LGIA…VVGI), and 356–376 (MLIG…MFVA).

Belongs to the major facilitator superfamily. DHA1 family. MdtL (TC 2.A.1.2.22) subfamily.

The protein resides in the cell inner membrane. Confers resistance to chloramphenicol. The protein is Multidrug resistance protein MdtL of Escherichia coli O139:H28 (strain E24377A / ETEC).